Consider the following 281-residue polypeptide: ATP synthase gamma chain (281 aa).

This sequence belongs to the ATPase gamma chain family. As to quaternary structure, F-type ATPases have 2 components, CF(1) - the catalytic core - and CF(0) - the membrane proton channel. CF(1) has five subunits: alpha(3), beta(3), gamma(1), delta(1), epsilon(1). CF(0) has three main subunits: a, b and c.

It localises to the cell membrane. Functionally, produces ATP from ADP in the presence of a proton gradient across the membrane. The gamma chain is believed to be important in regulating ATPase activity and the flow of protons through the CF(0) complex. In Desulfitobacterium hafniense (strain DSM 10664 / DCB-2), this protein is ATP synthase gamma chain.